Consider the following 553-residue polypeptide: Dihydroxy-acid dehydratase (553 aa).

A Mg(2+)-binding site is contributed by Asp-78. Cys-119 is a binding site for [2Fe-2S] cluster. Mg(2+)-binding residues include Asp-120 and Lys-121. An N6-carboxylysine modification is found at Lys-121. Cys-191 is a [2Fe-2S] cluster binding site. Glu-444 contacts Mg(2+). Ser-470 serves as the catalytic Proton acceptor.

This sequence belongs to the IlvD/Edd family. Homodimer. Requires [2Fe-2S] cluster as cofactor. Mg(2+) serves as cofactor.

The enzyme catalyses (2R)-2,3-dihydroxy-3-methylbutanoate = 3-methyl-2-oxobutanoate + H2O. It catalyses the reaction (2R,3R)-2,3-dihydroxy-3-methylpentanoate = (S)-3-methyl-2-oxopentanoate + H2O. The protein operates within amino-acid biosynthesis; L-isoleucine biosynthesis; L-isoleucine from 2-oxobutanoate: step 3/4. Its pathway is amino-acid biosynthesis; L-valine biosynthesis; L-valine from pyruvate: step 3/4. Functions in the biosynthesis of branched-chain amino acids. Catalyzes the dehydration of (2R,3R)-2,3-dihydroxy-3-methylpentanoate (2,3-dihydroxy-3-methylvalerate) into 2-oxo-3-methylpentanoate (2-oxo-3-methylvalerate) and of (2R)-2,3-dihydroxy-3-methylbutanoate (2,3-dihydroxyisovalerate) into 2-oxo-3-methylbutanoate (2-oxoisovalerate), the penultimate precursor to L-isoleucine and L-valine, respectively. The polypeptide is Dihydroxy-acid dehydratase (Methanococcoides burtonii (strain DSM 6242 / NBRC 107633 / OCM 468 / ACE-M)).